We begin with the raw amino-acid sequence, 388 residues long: Chorismate synthase (388 aa).

NADP(+) is bound by residues R39 and R45. FMN is bound by residues 130–132 (RSS), 251–252 (NA), G296, 311–315 (KPIPT), and R337.

This sequence belongs to the chorismate synthase family. Homotetramer. It depends on FMNH2 as a cofactor.

It catalyses the reaction 5-O-(1-carboxyvinyl)-3-phosphoshikimate = chorismate + phosphate. The protein operates within metabolic intermediate biosynthesis; chorismate biosynthesis; chorismate from D-erythrose 4-phosphate and phosphoenolpyruvate: step 7/7. In terms of biological role, catalyzes the anti-1,4-elimination of the C-3 phosphate and the C-6 proR hydrogen from 5-enolpyruvylshikimate-3-phosphate (EPSP) to yield chorismate, which is the branch point compound that serves as the starting substrate for the three terminal pathways of aromatic amino acid biosynthesis. This reaction introduces a second double bond into the aromatic ring system. This is Chorismate synthase from Streptococcus pyogenes serotype M28 (strain MGAS6180).